A 112-amino-acid polypeptide reads, in one-letter code: Hydrogenase maturation factor HypA (112 aa).

Ni(2+) is bound at residue His2. 4 residues coordinate Zn(2+): Cys72, Cys75, Cys88, and Cys91.

This sequence belongs to the HypA/HybF family.

In terms of biological role, involved in the maturation of [NiFe] hydrogenases. Required for nickel insertion into the metal center of the hydrogenase. In Francisella philomiragia subsp. philomiragia (strain ATCC 25017 / CCUG 19701 / FSC 153 / O#319-036), this protein is Hydrogenase maturation factor HypA.